A 412-amino-acid polypeptide reads, in one-letter code: MEEEHEEESHLSQSDTVGSAIVEDGPGKEYEIYIKNEELVDKLKLLNYEDGFLKLGVVYKPILKHYFVKSKNVGEQFFLFTSLAAWLIKKSGDESYNMPQEFDDPNSTLANIMAAAKNKGIATDFTAAKLKSGAGENVIFILNSLADASLVHVGFQWQKMIPPKEEDEDTAVDEQDEDDDNDDIVEEPMNFLDDDDDDNVIEIDLKAQGLATESKNPLQSVLQSNTDAITWKQEVERVAPQLKITLKQDAKDWRLHLEQMNSMHKNVEQKVGNVGPYLDNMSKDIAKALERIASREKSLNSQLASMMSKFRRATDTRAELREKYKAASVGVSSRTETLDRISDDIEQLKQQIEEQGAKSSDGAPLVKIKQAVSKLEEELQTMNVQIGVFEQSILNTYLRDHFNFSANLLNIM.

2 disordered regions span residues 1–21 (MEEE…GSAI) and 162–193 (PPKE…NFLD). Acidic residues predominate over residues 165–193 (EEDEDTAVDEQDEDDDNDDIVEEPMNFLD). Residues 302–393 (QLASMMSKFR…VQIGVFEQSI (92 aa)) are a coiled coil.

The protein belongs to the IFT57 family. As to quaternary structure, component of the IFT complex B composed of at least che-2, che-13, dyf-1, dyf-3, dyf-6, dyf-11, dyf-13, ift-20, ift-74, ift-81, ifta-2, osm-1, osm-5 and osm-6.

Its subcellular location is the cytoplasm. The protein localises to the cytoskeleton. The protein resides in the cilium axoneme. Component of the intraflagellar transport (IFT) complex B required for transport of proteins in the motile cilium. May be required for ciliary entrance and transport of specific ciliary cargo proteins such as che-3 which are related to motility. Required for the formation of chemosensory cilia that detect chemosensory cues. This is Intraflagellar transport protein che-13 from Caenorhabditis elegans.